Consider the following 83-residue polypeptide: Cytochrome b559 subunit alpha (83 aa).

A helical transmembrane segment spans residues 21–35; sequence VIHSITIPSLFIAGW. A heme-binding site is contributed by H23.

The protein belongs to the PsbE/PsbF family. Heterodimer of an alpha subunit and a beta subunit. PSII is composed of 1 copy each of membrane proteins PsbA, PsbB, PsbC, PsbD, PsbE, PsbF, PsbH, PsbI, PsbJ, PsbK, PsbL, PsbM, PsbT, PsbX, PsbY, PsbZ, Psb30/Ycf12, at least 3 peripheral proteins of the oxygen-evolving complex and a large number of cofactors. It forms dimeric complexes. The cofactor is heme b.

It localises to the plastid. The protein resides in the chloroplast thylakoid membrane. Its function is as follows. This b-type cytochrome is tightly associated with the reaction center of photosystem II (PSII). PSII is a light-driven water:plastoquinone oxidoreductase that uses light energy to abstract electrons from H(2)O, generating O(2) and a proton gradient subsequently used for ATP formation. It consists of a core antenna complex that captures photons, and an electron transfer chain that converts photonic excitation into a charge separation. In Ginkgo biloba (Ginkgo), this protein is Cytochrome b559 subunit alpha.